The chain runs to 168 residues: Small ribosomal subunit protein uS5 (168 aa).

The region spanning 17-80 (IEDQLVAVNR…EDGKKKMINV (64 aa)) is the S5 DRBM domain.

It belongs to the universal ribosomal protein uS5 family. As to quaternary structure, part of the 30S ribosomal subunit. Contacts proteins S4 and S8.

In terms of biological role, with S4 and S12 plays an important role in translational accuracy. Its function is as follows. Located at the back of the 30S subunit body where it stabilizes the conformation of the head with respect to the body. This is Small ribosomal subunit protein uS5 from Lactobacillus helveticus (strain DPC 4571).